Here is a 49-residue protein sequence, read N- to C-terminus: U-theraphotoxin-Lk2a (49 aa).

4 disulfide bridges follow: cysteine 4–cysteine 17, cysteine 8–cysteine 41, cysteine 22–cysteine 24, and cysteine 35–cysteine 46.

The protein belongs to the neurotoxin 12 (Hwtx-2) family. 04 (lasiotoxin) subfamily. In terms of tissue distribution, expressed by the venom gland.

The protein localises to the secreted. In terms of biological role, toxin that causes irreversible contractile paralysis into adult Aedes aegypti resulting in 100% mortality after 24 hours. The chain is U-theraphotoxin-Lk2a from Lasiodora klugi (Bahia scarlet tarantula).